A 178-amino-acid polypeptide reads, in one-letter code: Cytochrome b6-f complex subunit 4 (178 aa).

3 consecutive transmembrane segments (helical) span residues Leu36–Val56, Leu95–Glu115, and Thr131–Ile151.

It belongs to the cytochrome b family. PetD subfamily. The 4 large subunits of the cytochrome b6-f complex are cytochrome b6, subunit IV (17 kDa polypeptide, petD), cytochrome f and the Rieske protein, while the 4 small subunits are petG, petL, petM and petN. The complex functions as a dimer.

It is found in the plastid. The protein resides in the chloroplast thylakoid membrane. In terms of biological role, component of the cytochrome b6-f complex, which mediates electron transfer between photosystem II (PSII) and photosystem I (PSI), cyclic electron flow around PSI, and state transitions. The sequence is that of Cytochrome b6-f complex subunit 4 from Picea abies (Norway spruce).